Here is a 424-residue protein sequence, read N- to C-terminus: Serine--tRNA ligase (424 aa).

Residue 229–231 (TAE) participates in L-serine binding. Residues 260–262 (RTE) and valine 276 contribute to the ATP site. Glutamate 283 is a binding site for L-serine. An ATP-binding site is contributed by 347-350 (EVTS). An L-serine-binding site is contributed by threonine 382.

The protein belongs to the class-II aminoacyl-tRNA synthetase family. Type-1 seryl-tRNA synthetase subfamily. In terms of assembly, homodimer. The tRNA molecule binds across the dimer.

The protein resides in the cytoplasm. It catalyses the reaction tRNA(Ser) + L-serine + ATP = L-seryl-tRNA(Ser) + AMP + diphosphate + H(+). It carries out the reaction tRNA(Sec) + L-serine + ATP = L-seryl-tRNA(Sec) + AMP + diphosphate + H(+). It participates in aminoacyl-tRNA biosynthesis; selenocysteinyl-tRNA(Sec) biosynthesis; L-seryl-tRNA(Sec) from L-serine and tRNA(Sec): step 1/1. Its function is as follows. Catalyzes the attachment of serine to tRNA(Ser). Is also able to aminoacylate tRNA(Sec) with serine, to form the misacylated tRNA L-seryl-tRNA(Sec), which will be further converted into selenocysteinyl-tRNA(Sec). The chain is Serine--tRNA ligase from Rubrobacter xylanophilus (strain DSM 9941 / JCM 11954 / NBRC 16129 / PRD-1).